The following is a 444-amino-acid chain: Tubulin beta-8 chain (444 aa).

The short motif at 1-4 (MREI) is the MREI motif element. Positions 11, 69, 138, 142, 143, and 144 each coordinate GTP. Mg(2+) is bound at residue Glu-69. Ser-172 carries the post-translational modification Phosphoserine; by CDK1. The GTP site is built by Asn-204 and Asn-226. Positions 423-444 (QQYQDATAEEEEDEEYAEEEVA) are disordered. Residues 429–444 (TAEEEEDEEYAEEEVA) show a composition bias toward acidic residues. Glu-436 is modified (5-glutamyl polyglutamate).

The protein belongs to the tubulin family. As to quaternary structure, dimer of alpha and beta chains. A typical microtubule is a hollow water-filled tube with an outer diameter of 25 nm and an inner diameter of 15 nM. Alpha-beta heterodimers associate head-to-tail to form protofilaments running lengthwise along the microtubule wall with the beta-tubulin subunit facing the microtubule plus end conferring a structural polarity. Microtubules usually have 13 protofilaments but different protofilament numbers can be found in some organisms and specialized cells. Mg(2+) serves as cofactor. In terms of processing, some glutamate residues at the C-terminus are polyglycylated, resulting in polyglycine chains on the gamma-carboxyl group. Glycylation is mainly limited to tubulin incorporated into axonemes (cilia and flagella) whereas glutamylation is prevalent in neuronal cells, centrioles, axonemes, and the mitotic spindle. Both modifications can coexist on the same protein on adjacent residues, and lowering polyglycylation levels increases polyglutamylation, and reciprocally. Cilia and flagella glycylation is required for their stability and maintenance. Flagella glycylation controls sperm motility. Post-translationally, some glutamate residues at the C-terminus are polyglutamylated, resulting in polyglutamate chains on the gamma-carboxyl group. Polyglutamylation plays a key role in microtubule severing by spastin (SPAST). SPAST preferentially recognizes and acts on microtubules decorated with short polyglutamate tails: severing activity by SPAST increases as the number of glutamates per tubulin rises from one to eight, but decreases beyond this glutamylation threshold. Glutamylation is also involved in cilia motility. Phosphorylated on Ser-172 by CDK1 during the cell cycle, from metaphase to telophase, but not in interphase. This phosphorylation inhibits tubulin incorporation into microtubules.

Its subcellular location is the cytoplasm. The protein localises to the cytoskeleton. It is found in the spindle. Tubulin is the major constituent of microtubules, a cylinder consisting of laterally associated linear protofilaments composed of alpha- and beta-tubulin heterodimers. Microtubules grow by the addition of GTP-tubulin dimers to the microtubule end, where a stabilizing cap forms. Below the cap, tubulin dimers are in GDP-bound state, owing to GTPase activity of alpha-tubulin. Has a key role in meiotic spindle assembly and oocyte maturation. In Pan troglodytes (Chimpanzee), this protein is Tubulin beta-8 chain (TUBB8).